A 207-amino-acid polypeptide reads, in one-letter code: 23 kDa calcium-binding protein (207 aa).

Met1 bears the Blocked amino end (Met) mark. EF-hand domains follow at residues Ala17–Asn52, Val60–Lys95, Met119–Gln154, and Pro161–Lys196. Ca(2+) contacts are provided by Asp30, Asn32, Asn34, Thr36, Glu41, Asp73, Asp75, Asn77, Glu84, Asp132, Asp134, Ser136, Gln138, Glu143, Asp174, Asp176, Asn178, Thr180, and Glu185.

Expected to play a crucial role in calcium-dependent regulation of ciliary movement. The chain is 23 kDa calcium-binding protein from Tetrahymena thermophila.